Reading from the N-terminus, the 179-residue chain is Large ribosomal subunit protein uL6 (179 aa).

It belongs to the universal ribosomal protein uL6 family. As to quaternary structure, part of the 50S ribosomal subunit.

Functionally, this protein binds to the 23S rRNA, and is important in its secondary structure. It is located near the subunit interface in the base of the L7/L12 stalk, and near the tRNA binding site of the peptidyltransferase center. This Fructilactobacillus sanfranciscensis (Lactobacillus sanfranciscensis) protein is Large ribosomal subunit protein uL6.